The chain runs to 322 residues: Acetyl-coenzyme A carboxylase carboxyl transferase subunit alpha (322 aa).

Positions 30 to 293 constitute a CoA carboxyltransferase C-terminal domain; that stretch reads ALDISAEITR…RQALQESLRK (264 aa).

It belongs to the AccA family. In terms of assembly, acetyl-CoA carboxylase is a heterohexamer composed of biotin carboxyl carrier protein (AccB), biotin carboxylase (AccC) and two subunits each of ACCase subunit alpha (AccA) and ACCase subunit beta (AccD).

It is found in the cytoplasm. It catalyses the reaction N(6)-carboxybiotinyl-L-lysyl-[protein] + acetyl-CoA = N(6)-biotinyl-L-lysyl-[protein] + malonyl-CoA. It participates in lipid metabolism; malonyl-CoA biosynthesis; malonyl-CoA from acetyl-CoA: step 1/1. Component of the acetyl coenzyme A carboxylase (ACC) complex. First, biotin carboxylase catalyzes the carboxylation of biotin on its carrier protein (BCCP) and then the CO(2) group is transferred by the carboxyltransferase to acetyl-CoA to form malonyl-CoA. The polypeptide is Acetyl-coenzyme A carboxylase carboxyl transferase subunit alpha (Nitrosomonas eutropha (strain DSM 101675 / C91 / Nm57)).